Consider the following 462-residue polypeptide: F-box/LRR-repeat protein At5g38396 (462 aa).

Residues 1–47 (MDLLRNIPDELICHILSFLTTKEAALTSVLSKRWRNLLAFVSNLHID) enclose the F-box domain. 5 LRR repeats span residues 118–146 (SIDL…KLHR), 148–175 (CIGQ…ELDY), 197–222 (VDAF…TMSS), 302–333 (CLDL…SIKS), and 334–359 (AENR…VLEG).

This Arabidopsis thaliana (Mouse-ear cress) protein is F-box/LRR-repeat protein At5g38396.